Consider the following 424-residue polypeptide: Gamma-glutamyl phosphate reductase (424 aa).

It belongs to the gamma-glutamyl phosphate reductase family.

The protein localises to the cytoplasm. It carries out the reaction L-glutamate 5-semialdehyde + phosphate + NADP(+) = L-glutamyl 5-phosphate + NADPH + H(+). Its pathway is amino-acid biosynthesis; L-proline biosynthesis; L-glutamate 5-semialdehyde from L-glutamate: step 2/2. Catalyzes the NADPH-dependent reduction of L-glutamate 5-phosphate into L-glutamate 5-semialdehyde and phosphate. The product spontaneously undergoes cyclization to form 1-pyrroline-5-carboxylate. This is Gamma-glutamyl phosphate reductase from Dehalococcoides mccartyi (strain ATCC BAA-2266 / KCTC 15142 / 195) (Dehalococcoides ethenogenes (strain 195)).